Here is a 541-residue protein sequence, read N- to C-terminus: Chaperonin GroEL 2 (541 aa).

ATP-binding positions include 29–32, 86–90, glycine 413, 476–478, and aspartate 492; these read TLGP, DGTTT, and NAA.

This sequence belongs to the chaperonin (HSP60) family. Forms a cylinder of 14 subunits composed of two heptameric rings stacked back-to-back. Interacts with the co-chaperonin GroES.

It is found in the secreted. Its subcellular location is the capsule. The protein resides in the cell surface. It localises to the cell wall. It carries out the reaction ATP + H2O + a folded polypeptide = ADP + phosphate + an unfolded polypeptide.. Together with its co-chaperonin GroES, plays an essential role in assisting protein folding. The GroEL-GroES system forms a nano-cage that allows encapsulation of the non-native substrate proteins and provides a physical environment optimized to promote and accelerate protein folding. This Mycolicibacterium paratuberculosis (strain ATCC BAA-968 / K-10) (Mycobacterium paratuberculosis) protein is Chaperonin GroEL 2.